The chain runs to 490 residues: Argininosuccinate lyase (490 aa).

2 disordered regions span residues 426–452 and 469–490; these read DPES…LSAA and ALAT…TAPE. Positions 440–452 are enriched in low complexity; sequence PAPESMAAALSAA. Residues 469–480 show a composition bias toward basic and acidic residues; the sequence is ALATAADERERV.

The protein belongs to the lyase 1 family. Argininosuccinate lyase subfamily.

It is found in the cytoplasm. The enzyme catalyses 2-(N(omega)-L-arginino)succinate = fumarate + L-arginine. The protein operates within amino-acid biosynthesis; L-arginine biosynthesis; L-arginine from L-ornithine and carbamoyl phosphate: step 3/3. The sequence is that of Argininosuccinate lyase from Natronomonas pharaonis (strain ATCC 35678 / DSM 2160 / CIP 103997 / JCM 8858 / NBRC 14720 / NCIMB 2260 / Gabara) (Halobacterium pharaonis).